The chain runs to 230 residues: Sodium channel modifier 1 (230 aa).

Ser-2 bears the Phosphoserine mark. The Bipartite nuclear localization signal signature appears at 4 to 20 (KREGDDWSQLNVLKKRR). The Matrin-type zinc-finger motif lies at 42–74 (FACAICPHRPVLDTLAMLTAHRAGKKHLSSLQL). Lys-67 participates in a covalent cross-link: Glycyl lysine isopeptide (Lys-Gly) (interchain with G-Cter in SUMO2). Disordered regions lie at residues 76 to 106 (YGKK…EAPL) and 129 to 191 (RRKY…RALD). The span at 89 to 100 (PRQHNELRREET) shows a compositional bias: basic and acidic residues. Pro residues predominate over residues 142–151 (SRPPLPPPEV). Residues 167 to 180 (GSQTKESATVSSPA) are compositionally biased toward polar residues. A phosphoserine mark is found at Ser-183 and Ser-219. Positions 188-230 (RALDHYLTLRSSGWIPDGRGRWIKDENVEFDSDEEEPPDLPLD) are required for interaction with LUC7L2.

As to quaternary structure, component of the minor spliceosome. Within this complex, interacts with RNF113A, as well as with SF3B1/SF3b155, SF3B2/SF3b145, SF3B3/SF3b130 and CDC5L. May interact with LUC7L2 and SNRNP70.

Its subcellular location is the nucleus. It localises to the nucleoplasm. The protein localises to the nucleus speckle. As a component of the minor spliceosome, involved in the splicing of U12-type introns in pre-mRNAs. Plays a role in the regulation of primary cilia length and Hedgehog signaling. The protein is Sodium channel modifier 1 (SCNM1) of Bos taurus (Bovine).